The following is a 537-amino-acid chain: CTP synthase (537 aa).

The segment at 1 to 267 (MAKFVFVTGG…ADIVLDKLGI (267 aa)) is amidoligase domain. Serine 13 is a binding site for CTP. Serine 13 lines the UTP pocket. ATP is bound at residue 14-19 (SLGKGI). Tyrosine 54 contributes to the L-glutamine binding site. Aspartate 71 is an ATP binding site. Mg(2+)-binding residues include aspartate 71 and glutamate 141. CTP contacts are provided by residues 148-150 (DIE), 188-193 (KTKPTQ), and lysine 224. Residues 188–193 (KTKPTQ) and lysine 224 contribute to the UTP site. In terms of domain architecture, Glutamine amidotransferase type-1 spans 292–534 (TIALVGKYVS…IGAARKYKES (243 aa)). Glycine 354 lines the L-glutamine pocket. Catalysis depends on cysteine 381, which acts as the Nucleophile; for glutamine hydrolysis. Residues 382-385 (LGMQ), glutamate 405, and arginine 462 contribute to the L-glutamine site. Residues histidine 507 and glutamate 509 contribute to the active site.

The protein belongs to the CTP synthase family. As to quaternary structure, homotetramer.

The catalysed reaction is UTP + L-glutamine + ATP + H2O = CTP + L-glutamate + ADP + phosphate + 2 H(+). It catalyses the reaction L-glutamine + H2O = L-glutamate + NH4(+). It carries out the reaction UTP + NH4(+) + ATP = CTP + ADP + phosphate + 2 H(+). It participates in pyrimidine metabolism; CTP biosynthesis via de novo pathway; CTP from UDP: step 2/2. Its activity is regulated as follows. Allosterically activated by GTP, when glutamine is the substrate; GTP has no effect on the reaction when ammonia is the substrate. The allosteric effector GTP functions by stabilizing the protein conformation that binds the tetrahedral intermediate(s) formed during glutamine hydrolysis. Inhibited by the product CTP, via allosteric rather than competitive inhibition. In terms of biological role, catalyzes the ATP-dependent amination of UTP to CTP with either L-glutamine or ammonia as the source of nitrogen. Regulates intracellular CTP levels through interactions with the four ribonucleotide triphosphates. In Pelotomaculum thermopropionicum (strain DSM 13744 / JCM 10971 / SI), this protein is CTP synthase.